Here is a 795-residue protein sequence, read N- to C-terminus: Antibiotic resistant DNA gyrase subunit B (795 aa).

A Toprim domain is found at 421 to 536 (SELYLVEGNS…RGYIYIAQPP (116 aa)). 3 residues coordinate Mg(2+): E427, D501, and D503.

This sequence belongs to the type II topoisomerase GyrB family. In terms of assembly, heterotetramer, composed of two GyrA and two GyrB chains. In the heterotetramer, GyrA contains the active site tyrosine that forms a transient covalent intermediate with DNA, while GyrB binds cofactors and catalyzes ATP hydrolysis. It depends on Mg(2+) as a cofactor. Mn(2+) serves as cofactor. Ca(2+) is required as a cofactor.

It is found in the cytoplasm. It carries out the reaction ATP-dependent breakage, passage and rejoining of double-stranded DNA.. A type II topoisomerase that negatively supercoils closed circular double-stranded (ds) DNA in an ATP-dependent manner to modulate DNA topology and maintain chromosomes in an underwound state. Negative supercoiling favors strand separation, and DNA replication, transcription, recombination and repair, all of which involve strand separation. Also able to catalyze the interconversion of other topological isomers of dsDNA rings, including catenanes and knotted rings. Type II topoisomerases break and join 2 DNA strands simultaneously in an ATP-dependent manner. The polypeptide is Antibiotic resistant DNA gyrase subunit B (Neisseria gonorrhoeae).